Here is a 515-residue protein sequence, read N- to C-terminus: NAD(P)H-quinone oxidoreductase subunit 2 (515 aa).

14 consecutive transmembrane segments (helical) span residues 14–34 (TILP…ADLI), 42–62 (WTPY…IPLW), 79–99 (LSLF…LMSI), 109–128 (LGEF…FIAG), 132–151 (LVFI…LLTG), 167–187 (LLIG…LYGL), 206–226 (LGLV…ISAV), 240–260 (PTPV…ALAI), 274–294 (WQLI…VVAL), 302–322 (MLAY…VVGT), 330–350 (LFYL…VILF), 374–394 (LGLS…GFFG), 396–416 (IYLF…LGLL), and 462–482 (VGLV…NPLF).

It belongs to the complex I subunit 2 family. NDH-1 can be composed of about 15 different subunits; different subcomplexes with different compositions have been identified which probably have different functions.

The protein localises to the cellular thylakoid membrane. It catalyses the reaction a plastoquinone + NADH + (n+1) H(+)(in) = a plastoquinol + NAD(+) + n H(+)(out). It carries out the reaction a plastoquinone + NADPH + (n+1) H(+)(in) = a plastoquinol + NADP(+) + n H(+)(out). Its function is as follows. NDH-1 shuttles electrons from an unknown electron donor, via FMN and iron-sulfur (Fe-S) centers, to quinones in the respiratory and/or the photosynthetic chain. The immediate electron acceptor for the enzyme in this species is believed to be plastoquinone. Couples the redox reaction to proton translocation, and thus conserves the redox energy in a proton gradient. Cyanobacterial NDH-1 also plays a role in inorganic carbon-concentration. This Thermosynechococcus vestitus (strain NIES-2133 / IAM M-273 / BP-1) protein is NAD(P)H-quinone oxidoreductase subunit 2.